We begin with the raw amino-acid sequence, 112 residues long: Large ribosomal subunit protein bL17 (112 aa).

Belongs to the bacterial ribosomal protein bL17 family. As to quaternary structure, part of the 50S ribosomal subunit. Contacts protein L32.

This is Large ribosomal subunit protein bL17 from Caldanaerobacter subterraneus subsp. tengcongensis (strain DSM 15242 / JCM 11007 / NBRC 100824 / MB4) (Thermoanaerobacter tengcongensis).